Reading from the N-terminus, the 728-residue chain is 1,4-alpha-glucan branching enzyme GlgB (728 aa).

The active-site Nucleophile is the Asp-405. Residue Glu-458 is the Proton donor of the active site.

The protein belongs to the glycosyl hydrolase 13 family. GlgB subfamily. As to quaternary structure, monomer.

The enzyme catalyses Transfers a segment of a (1-&gt;4)-alpha-D-glucan chain to a primary hydroxy group in a similar glucan chain.. Its pathway is glycan biosynthesis; glycogen biosynthesis. In terms of biological role, catalyzes the formation of the alpha-1,6-glucosidic linkages in glycogen by scission of a 1,4-alpha-linked oligosaccharide from growing alpha-1,4-glucan chains and the subsequent attachment of the oligosaccharide to the alpha-1,6 position. This Serratia proteamaculans (strain 568) protein is 1,4-alpha-glucan branching enzyme GlgB.